The primary structure comprises 550 residues: Glucose-6-phosphate isomerase (550 aa).

D-glucose 6-phosphate-binding positions include 163-164 (GS), 214-219 (SKTFTT), Q358, E362, H393, and K515. Residue E362 is the Proton donor of the active site. Active-site residues include H393 and K515.

It belongs to the GPI family. Homodimer.

It localises to the cytoplasm. It catalyses the reaction alpha-D-glucose 6-phosphate = beta-D-fructose 6-phosphate. It participates in carbohydrate degradation; glycolysis; D-glyceraldehyde 3-phosphate and glycerone phosphate from D-glucose: step 2/4. In the cytoplasm, catalyzes the conversion of glucose-6-phosphate to fructose-6-phosphate, the second step in glycolysis, and the reverse reaction during gluconeogenesis. The polypeptide is Glucose-6-phosphate isomerase (PGI1) (Candida albicans (strain SC5314 / ATCC MYA-2876) (Yeast)).